The sequence spans 284 residues: Insulin-like growth factor-binding protein 2 (284 aa).

Positions 1–21 (MGLSRYLLGLLLGVLCTPAPA) are cleaved as a signal peptide. Residues 23 to 106 (VLFRCPPCSP…VLGLGTCGKR (84 aa)) enclose the IGFBP N-terminal domain. Disulfide bonds link Cys-27–Cys-56, Cys-30–Cys-58, Cys-38–Cys-59, Cys-47–Cys-62, Cys-70–Cys-83, and Cys-77–Cys-103. The interval 108-184 (DTEYGSSQER…KSEDKKRPAR (77 aa)) is disordered. The segment covering 117-127 (RGTELPEERSD) has biased composition (basic and acidic residues). The segment covering 136-145 (EAGPAVAGEA) has biased composition (low complexity). A compositionally biased stretch (basic and acidic residues) spans 152–180 (KKEMKEIAVTRERANEQQRSKSNKSEDKK). A Thyroglobulin type-1 domain is found at 184–266 (RSLCQLQLDQ…SPTIRGDPEC (83 aa)). Cystine bridges form between Cys-187/Cys-221, Cys-232/Cys-243, and Cys-245/Cys-266. The Cell attachment site motif lies at 261 to 263 (RGD).

As to quaternary structure, interacts with igf1 and igf2.

The protein localises to the secreted. IGF-binding proteins prolong the half-life of the IGFs and have been shown to either inhibit or stimulate the growth promoting effects of the IGFs on cell culture. They alter the interaction of IGFs with their cell surface receptors. The polypeptide is Insulin-like growth factor-binding protein 2 (Xenopus tropicalis (Western clawed frog)).